We begin with the raw amino-acid sequence, 268 residues long: Tetraspanin-5 (268 aa).

Over 1-17 (MSGKHYKGPEVSCCIKY) the chain is Cytoplasmic. The helical transmembrane segment at 18–38 (FIFGFNVIFWFLGIAFLGIGL) threads the bilayer. Over 39 to 61 (WAWNEKGVLSNISSITDLGGFDP) the chain is Extracellular. The N-linked (GlcNAc...) asparagine glycan is linked to asparagine 49. The helical transmembrane segment at 62–82 (VWLFLVVGGVMFILGFAGCIG) threads the bilayer. The Cytoplasmic segment spans residues 83-92 (ALRENTFLLK). A helical transmembrane segment spans residues 93 to 113 (FFSVFLGIIFFLELTAGVLAF). At 114 to 232 (VFKDWIKDQL…PQFEKWLQDN (119 aa)) the chain is on the extracellular side. Intrachain disulfides connect cysteine 153–cysteine 221, cysteine 154–cysteine 186, cysteine 170–cysteine 180, and cysteine 187–cysteine 200. N-linked (GlcNAc...) asparagine glycosylation is found at asparagine 169 and asparagine 174. Asparagine 232 carries an N-linked (GlcNAc...) asparagine glycan. Residues 233-253 (LTIVAGIFIGIALLQIFGICL) traverse the membrane as a helical segment. Residues 254–268 (AQNLVSDIEAVRASW) lie on the Cytoplasmic side of the membrane.

It belongs to the tetraspanin (TM4SF) family. Interacts with ADAM10; the interaction influences ADAM10 substrate specificity, endocytosis and turnover. Palmitoylated.

The protein localises to the cell membrane. Part of TspanC8 subgroup, composed of 6 members that interact with the transmembrane metalloprotease ADAM10. This interaction is required for ADAM10 exit from the endoplasmic reticulum and for enzymatic maturation and trafficking to the cell surface as well as substrate specificity. Different TspanC8/ADAM10 complexes have distinct substrates. Promotes ADAM10-mediated cleavage of CD44. Seems to regulate VE-cadherin expression in endothelial cells probably through interaction with ADAM10, promoting leukocyte transmigration. In Bos taurus (Bovine), this protein is Tetraspanin-5 (TSPAN5).